Reading from the N-terminus, the 1203-residue chain is Rho GTPase-activating protein gacGG (1203 aa).

7 RCC1 repeats span residues 52-104 (TGEL…AIME), 106-148 (GLLY…VVAD), 155-204 (KRSV…AIVE), 206-255 (NEVF…ARSG), 257-298 (GNVC…VLSE), 299-359 (KGEI…EGRN), and 361-410 (LSVY…YLRG). The disordered stretch occupies residues 316 to 343 (KLDVNSSPNINSSSGTTTPTTNTTTTTK). Over residues 320-343 (NSSPNINSSSGTTTPTTNTTTTTK) the composition is skewed to low complexity. Residues 381–594 (VDIAESMRRK…TIMKQYPLME (214 aa)) enclose the Rho-GAP domain. Positions 649-679 (TLEIKNNQNNQNNQKENNNNNNNINNSNNNN) form a coiled coil. Disordered stretches follow at residues 657–725 (NNQN…TGNI), 746–789 (KDGN…NLSP), and 831–852 (FANS…LIGS). Composition is skewed to low complexity over residues 746–788 (KDGN…PNLS) and 833–852 (NSGS…LIGS). Residues 995 to 1078 (FDLLEKSMTE…ISNQNLSRVN (84 aa)) adopt a coiled-coil conformation.

Its subcellular location is the cytoplasm. In terms of biological role, rho GTPase-activating protein involved in the signal transduction pathway. This Dictyostelium discoideum (Social amoeba) protein is Rho GTPase-activating protein gacGG (gacGG).